Reading from the N-terminus, the 249-residue chain is Acidic leucine-rich nuclear phosphoprotein 32 family member A (249 aa).

Position 15 is a phosphothreonine (threonine 15). Serine 17 is subject to Phosphoserine. LRR repeat units lie at residues 18–38 (DVKELVLDNCRSNEGKIEGLT), 43–64 (ELEFLSTINVGLTSVANLPKLN), 65–87 (KLKKLELSDNRISGGLEVLAEKC), and 89–110 (NLTHLNLSGNKIKDLSTIEPLK). The LRRCT domain maps to 123–161 (CEVTNLNDYRENVFKLLPQLTYLDGYDRDDKEAPDSDAE). The span at 147-156 (GYDRDDKEAP) shows a compositional bias: basic and acidic residues. A disordered region spans residues 147-249 (GYDRDDKEAP…EPEDEGEDDD (103 aa)). Positions 150 to 174 (RDDKEAPDSDAEGYVEGLDDDEEDE) are necessary for tumor-suppressive function. Over residues 157–230 (DSDAEGYVEG…DEEDEEELGE (74 aa)) the composition is skewed to acidic residues. Phosphoserine occurs at positions 158 and 204. An interaction with E4F1 region spans residues 165–249 (EGLDDDEEDE…EPEDEGEDDD (85 aa)).

It belongs to the ANP32 family. As to quaternary structure, component of the SET complex, composed of at least ANP32A, APEX1, HMGB2, NME1, SET and TREX1. Directly interacts with SET. Interacts with ATXN1/SCA1. Interacts with MAP1B. Interacts with ELAVL1. Part of the INHAT (inhibitor of histone acetyltransferases) complex. Interacts with E4F1. Post-translationally, the N-terminus is blocked. Phosphorylated on serine residues, at least in part by casein kinase 2/CK2. In terms of processing, some glutamate residues are glycylated by TTLL8. This modification occurs exclusively on glutamate residues and results in a glycine chain on the gamma-carboxyl group. Widely distributed in the central nervous system, with an abundant expression in the cerebellum.

The protein localises to the nucleus. It is found in the cytoplasm. Its subcellular location is the endoplasmic reticulum. Its function is as follows. Multifunctional protein that is involved in the regulation of many processes including tumor suppression, apoptosis, cell cycle progression or transcription. Promotes apoptosis by favouring the activation of caspase-9/CASP9 and allowing apoptosome formation. In addition, plays a role in the modulation of histone acetylation and transcription as part of the INHAT (inhibitor of histone acetyltransferases) complex. Inhibits the histone-acetyltranferase activity of EP300/CREBBP (CREB-binding protein) and EP300/CREBBP-associated factor by histone masking. Preferentially binds to unmodified histone H3 and sterically inhibiting its acetylation and phosphorylation leading to cell growth inhibition. Participates in other biochemical processes such as regulation of mRNA nuclear-to-cytoplasmic translocation and stability by its association with ELAVL1 (Hu-antigen R). Plays a role in E4F1-mediated transcriptional repression as well as inhibition of protein phosphatase 2A. The protein is Acidic leucine-rich nuclear phosphoprotein 32 family member A (ANP32A) of Bos taurus (Bovine).